A 546-amino-acid polypeptide reads, in one-letter code: MTTRYIFVTGGVVSSLGKGIAAASLAAILEARGLNVTIMKLDPYINVDPGTMSPTQHGEVFVTEDGAETDLDLGHYERFIRTKMNRRNNFTTGRIYEEVLRKERRGDYLGATIQVIPHITNAIKEKVLAGGEGHDVAIVEIGGTVGDIESLPFLESIRQLGVELGRDRTLFMHLTLVPFLGAAGEVKTKPTQHSVKELRSIGIAPDVLICRGDRAIPANERAKISLFCNVEERAVISLKDVDSIYKIPALLRSQGLDELVVKRFSLTCREADLSEWENVIYQEANPNGEVVIGMVGKYIELPDAYKSVNEALKHAGLKNRVSVTIKYIDSQTVEAKGDEVLQGLDGILVPGGFGERGVEGKILAAKFARENNLPYFGICLGMQVALIEFARNVAGMADAHSTEFNKATPFPVVGLITEWVDEEGNVEQRHEASDLGGTMRLGAQLCHLLEGSKAAQAYKGNSCVERHRHRYEVNNKYKERLEQAGLVFSGLSSDRKLVEMIELKDHPWFVAGQFHPEFTSTPRDGHPLFEGFVAAASAHQKRDLKK.

Residues 1-266 (MTTRYIFVTG…DELVVKRFSL (266 aa)) are amidoligase domain. S14 contacts CTP. Residue S14 participates in UTP binding. ATP-binding positions include 15–20 (SLGKGI) and D72. Residues D72 and E140 each contribute to the Mg(2+) site. CTP contacts are provided by residues 147–149 (DIE), 187–192 (KTKPTQ), and K223. Residues 187-192 (KTKPTQ) and K223 contribute to the UTP site. 239-241 (KDV) is an ATP binding site. The 252-residue stretch at 291–542 (VIGMVGKYIE…VAAASAHQKR (252 aa)) folds into the Glutamine amidotransferase type-1 domain. G352 contributes to the L-glutamine binding site. C379 serves as the catalytic Nucleophile; for glutamine hydrolysis. L-glutamine contacts are provided by residues 380–383 (LGMQ), E403, and R470. Active-site residues include H515 and E517.

The protein belongs to the CTP synthase family. In terms of assembly, homotetramer.

It catalyses the reaction UTP + L-glutamine + ATP + H2O = CTP + L-glutamate + ADP + phosphate + 2 H(+). The catalysed reaction is L-glutamine + H2O = L-glutamate + NH4(+). It carries out the reaction UTP + NH4(+) + ATP = CTP + ADP + phosphate + 2 H(+). It functions in the pathway pyrimidine metabolism; CTP biosynthesis via de novo pathway; CTP from UDP: step 2/2. Allosterically activated by GTP, when glutamine is the substrate; GTP has no effect on the reaction when ammonia is the substrate. The allosteric effector GTP functions by stabilizing the protein conformation that binds the tetrahedral intermediate(s) formed during glutamine hydrolysis. Inhibited by the product CTP, via allosteric rather than competitive inhibition. In terms of biological role, catalyzes the ATP-dependent amination of UTP to CTP with either L-glutamine or ammonia as the source of nitrogen. Regulates intracellular CTP levels through interactions with the four ribonucleotide triphosphates. This is CTP synthase from Shewanella oneidensis (strain ATCC 700550 / JCM 31522 / CIP 106686 / LMG 19005 / NCIMB 14063 / MR-1).